The following is a 67-amino-acid chain: DNA-directed RNA polymerase subunit omega (67 aa).

It belongs to the RNA polymerase subunit omega family. The RNAP catalytic core consists of 2 alpha, 1 beta, 1 beta' and 1 omega subunit. When a sigma factor is associated with the core the holoenzyme is formed, which can initiate transcription.

The catalysed reaction is RNA(n) + a ribonucleoside 5'-triphosphate = RNA(n+1) + diphosphate. Promotes RNA polymerase assembly. Latches the N- and C-terminal regions of the beta' subunit thereby facilitating its interaction with the beta and alpha subunits. This chain is DNA-directed RNA polymerase subunit omega, found in Nautilia profundicola (strain ATCC BAA-1463 / DSM 18972 / AmH).